Here is a 354-residue protein sequence, read N- to C-terminus: UDP-N-acetylglucosamine--N-acetylmuramyl-(pentapeptide) pyrophosphoryl-undecaprenol N-acetylglucosamine transferase (354 aa).

UDP-N-acetyl-alpha-D-glucosamine is bound by residues 13 to 15 (SGG), N125, R161, S189, I242, 261 to 266 (ALTVSE), and Q286.

The protein belongs to the glycosyltransferase 28 family. MurG subfamily.

It localises to the cell inner membrane. It catalyses the reaction di-trans,octa-cis-undecaprenyl diphospho-N-acetyl-alpha-D-muramoyl-L-alanyl-D-glutamyl-meso-2,6-diaminopimeloyl-D-alanyl-D-alanine + UDP-N-acetyl-alpha-D-glucosamine = di-trans,octa-cis-undecaprenyl diphospho-[N-acetyl-alpha-D-glucosaminyl-(1-&gt;4)]-N-acetyl-alpha-D-muramoyl-L-alanyl-D-glutamyl-meso-2,6-diaminopimeloyl-D-alanyl-D-alanine + UDP + H(+). It participates in cell wall biogenesis; peptidoglycan biosynthesis. Cell wall formation. Catalyzes the transfer of a GlcNAc subunit on undecaprenyl-pyrophosphoryl-MurNAc-pentapeptide (lipid intermediate I) to form undecaprenyl-pyrophosphoryl-MurNAc-(pentapeptide)GlcNAc (lipid intermediate II). In Buchnera aphidicola subsp. Schizaphis graminum (strain Sg), this protein is UDP-N-acetylglucosamine--N-acetylmuramyl-(pentapeptide) pyrophosphoryl-undecaprenol N-acetylglucosamine transferase.